Here is an 89-residue protein sequence, read N- to C-terminus: Small ribosomal subunit protein uS15 (89 aa).

It belongs to the universal ribosomal protein uS15 family. Part of the 30S ribosomal subunit. Forms a bridge to the 50S subunit in the 70S ribosome, contacting the 23S rRNA.

In terms of biological role, one of the primary rRNA binding proteins, it binds directly to 16S rRNA where it helps nucleate assembly of the platform of the 30S subunit by binding and bridging several RNA helices of the 16S rRNA. Functionally, forms an intersubunit bridge (bridge B4) with the 23S rRNA of the 50S subunit in the ribosome. The protein is Small ribosomal subunit protein uS15 of Hahella chejuensis (strain KCTC 2396).